We begin with the raw amino-acid sequence, 190 residues long: Holliday junction branch migration complex subunit RuvA (190 aa).

The domain I stretch occupies residues Met-1–Gly-64. Residues Ser-65–Gly-137 are domain II. Residues Gly-137–His-141 are flexible linker. The tract at residues Ala-142 to Arg-190 is domain III.

This sequence belongs to the RuvA family. Homotetramer. Forms an RuvA(8)-RuvB(12)-Holliday junction (HJ) complex. HJ DNA is sandwiched between 2 RuvA tetramers; dsDNA enters through RuvA and exits via RuvB. An RuvB hexamer assembles on each DNA strand where it exits the tetramer. Each RuvB hexamer is contacted by two RuvA subunits (via domain III) on 2 adjacent RuvB subunits; this complex drives branch migration. In the full resolvosome a probable DNA-RuvA(4)-RuvB(12)-RuvC(2) complex forms which resolves the HJ.

Its subcellular location is the cytoplasm. In terms of biological role, the RuvA-RuvB-RuvC complex processes Holliday junction (HJ) DNA during genetic recombination and DNA repair, while the RuvA-RuvB complex plays an important role in the rescue of blocked DNA replication forks via replication fork reversal (RFR). RuvA specifically binds to HJ cruciform DNA, conferring on it an open structure. The RuvB hexamer acts as an ATP-dependent pump, pulling dsDNA into and through the RuvAB complex. HJ branch migration allows RuvC to scan DNA until it finds its consensus sequence, where it cleaves and resolves the cruciform DNA. This chain is Holliday junction branch migration complex subunit RuvA, found in Bordetella parapertussis (strain 12822 / ATCC BAA-587 / NCTC 13253).